A 137-amino-acid chain; its full sequence is Cofilin-1A (137 aa).

Residues 2 to 135 (SSGIALAPNC…KDSCFYEKCT (134 aa)) enclose the ADF-H domain.

It belongs to the actin-binding proteins ADF family.

It is found in the nucleus matrix. It localises to the cytoplasm. The protein resides in the cytoskeleton. In terms of biological role, controls reversibly actin polymerization and depolymerization in a pH-sensitive manner. It has the ability to bind G- and F-actin in a 1:1 ratio of cofilin to actin. It is the major component of intranuclear and cytoplasmic actin rods. This Dictyostelium discoideum (Social amoeba) protein is Cofilin-1A (cofA).